We begin with the raw amino-acid sequence, 429 residues long: Glutamate-1-semialdehyde 2,1-aminomutase (429 aa).

Lysine 270 carries the post-translational modification N6-(pyridoxal phosphate)lysine.

Belongs to the class-III pyridoxal-phosphate-dependent aminotransferase family. HemL subfamily. As to quaternary structure, homodimer. The cofactor is pyridoxal 5'-phosphate.

Its subcellular location is the cytoplasm. It carries out the reaction (S)-4-amino-5-oxopentanoate = 5-aminolevulinate. Its pathway is porphyrin-containing compound metabolism; protoporphyrin-IX biosynthesis; 5-aminolevulinate from L-glutamyl-tRNA(Glu): step 2/2. The protein is Glutamate-1-semialdehyde 2,1-aminomutase of Cupriavidus pinatubonensis (strain JMP 134 / LMG 1197) (Cupriavidus necator (strain JMP 134)).